A 328-amino-acid chain; its full sequence is Ferredoxin--NADP reductase (328 aa).

FAD contacts are provided by Glu-36, Gln-44, Tyr-49, Val-89, Phe-123, Asp-284, and Thr-324.

This sequence belongs to the ferredoxin--NADP reductase type 2 family. In terms of assembly, homodimer. It depends on FAD as a cofactor.

The catalysed reaction is 2 reduced [2Fe-2S]-[ferredoxin] + NADP(+) + H(+) = 2 oxidized [2Fe-2S]-[ferredoxin] + NADPH. This is Ferredoxin--NADP reductase from Lacticaseibacillus paracasei (strain ATCC 334 / BCRC 17002 / CCUG 31169 / CIP 107868 / KCTC 3260 / NRRL B-441) (Lactobacillus paracasei).